Reading from the N-terminus, the 209-residue chain is Small ribosomal subunit protein uS3 (209 aa).

A KH type-2 domain is found at 38–107 (IRKFIKNKYY…RVVINIEEIK (70 aa)).

This sequence belongs to the universal ribosomal protein uS3 family. In terms of assembly, part of the 30S ribosomal subunit. Forms a tight complex with proteins S10 and S14.

Binds the lower part of the 30S subunit head. Binds mRNA in the 70S ribosome, positioning it for translation. The chain is Small ribosomal subunit protein uS3 from Thermotoga sp. (strain RQ2).